The following is a 349-amino-acid chain: T-cell immunoglobulin and mucin domain-containing protein 2 (349 aa).

A signal peptide spans 1–20; it reads MVQLQVFISGLLLLLPGAVA. The Extracellular segment spans residues 21-275; sequence SYTVVQGHSV…QKLQRNPTKG (255 aa). The region spanning 22–123 is the Ig-like V-type domain; it reads YTVVQGHSVT…AFYFVDYLLE (102 aa). 3 disulfide bridges follow: C34–C107, C48–C59, and C54–C106. N84 and N89 each carry an N-linked (GlcNAc...) asparagine glycan. Residues 128-271 form a disordered region; sequence LPTSPPTRPT…AIPPQKLQRN (144 aa). Over residues 136–215 the composition is skewed to low complexity; the sequence is PTNTGRPTTT…TSTPPTPEQT (80 aa). The span at 222 to 260 shows a compositional bias: polar residues; sequence ATTYYPDQTTAEVTEAPSHTPTDWNNTATSSDDSWNSDT. Residues 276–296 form a helical membrane-spanning segment; it reads FYVGMSFAALLLLLLASTVAI. Residues 297-349 are Cytoplasmic-facing; sequence TRYMVMRKNSGSLRFVAFPVSKIGASQNKVVEQARIEDEVYIIEDSPYFEEES.

Belongs to the immunoglobulin superfamily. TIM family. In terms of assembly, homodimer.

The protein localises to the cell membrane. Its function is as follows. Probable receptor for SEMA4A involved in the regulation of T-cell function. The interaction with SEMA4A enhances T-cell activation. In Rattus norvegicus (Rat), this protein is T-cell immunoglobulin and mucin domain-containing protein 2 (Timd2).